Reading from the N-terminus, the 219-residue chain is Ras-related protein Rab-3B (219 aa).

The residue at position 2 (alanine 2) is an N-acetylalanine. GTP is bound by residues serine 31, serine 32, valine 33, glycine 34, lysine 35, threonine 36, serine 37, proline 49, and serine 53. Residue threonine 36 participates in Mg(2+) binding. The Switch 1 motif lies at 45–58 (DTFTPAFVSTVGID). 2 residues coordinate Mg(2+): threonine 54 and aspartate 77. The short motif at 78 to 96 (TAGQERYRTITTAYYRGAM) is the Switch 2 element. Position 80 (glycine 80) interacts with GTP. Phosphothreonine is present on threonine 86. Residues asparagine 135, lysine 136, aspartate 138, alanine 166, and lysine 167 each coordinate GTP. Serine 188 carries the phosphoserine modification. 2 S-geranylgeranyl cysteine lipidation sites follow: cysteine 217 and cysteine 219. Cysteine 219 carries the cysteine methyl ester modification.

It belongs to the small GTPase superfamily. Rab family. As to quaternary structure, interacts with RIMS1, RIMS2, RPH3A and RPH3AL. The GTP-bound form interacts with GAS8/DRC4 (via coiled-coil domains). Interacts with GDI2, CHM and CHML; phosphorylation at Thr-86 disrupts these interactions. Interacts with MADD (via uDENN domain); the GTP-bound form is preferred for interaction. It depends on Mg(2+) as a cofactor. Post-translationally, phosphorylation of Thr-86 in the switch II region by LRRK2 prevents the association of RAB regulatory proteins, including CHM, CHML and RAB GDP dissociation inhibitor GDI2.

Its subcellular location is the cell membrane. The protein localises to the golgi apparatus. It catalyses the reaction GTP + H2O = GDP + phosphate + H(+). With respect to regulation, regulated by guanine nucleotide exchange factors (GEFs) which promote the exchange of bound GDP for free GTP. Regulated by GTPase activating proteins (GAPs) which increase the GTP hydrolysis activity. Inhibited by GDP dissociation inhibitors (GDIs) which prevent Rab-GDP dissociation. Functionally, the small GTPases Rab are key regulators of intracellular membrane trafficking, from the formation of transport vesicles to their fusion with membranes. Rabs cycle between an inactive GDP-bound form and an active GTP-bound form that is able to recruit to membranes different sets of downstream effectors directly responsible for vesicle formation, movement, tethering and fusion. This chain is Ras-related protein Rab-3B (RAB3B), found in Bos taurus (Bovine).